The chain runs to 389 residues: Putative glutamate--cysteine ligase 2 (389 aa).

This sequence belongs to the glutamate--cysteine ligase type 2 family. YbdK subfamily.

It catalyses the reaction L-cysteine + L-glutamate + ATP = gamma-L-glutamyl-L-cysteine + ADP + phosphate + H(+). Functionally, ATP-dependent carboxylate-amine ligase which exhibits weak glutamate--cysteine ligase activity. The protein is Putative glutamate--cysteine ligase 2 of Rhodospirillum rubrum (strain ATCC 11170 / ATH 1.1.1 / DSM 467 / LMG 4362 / NCIMB 8255 / S1).